Here is a 545-residue protein sequence, read N- to C-terminus: Hydroxylamine reductase (545 aa).

4 residues coordinate [4Fe-4S] cluster: Cys-3, Cys-6, Cys-15, and Cys-21. The hybrid [4Fe-2O-2S] cluster site is built by His-240, Glu-264, Cys-309, Cys-401, Cys-429, Cys-454, Glu-488, and Lys-490. Residue Cys-401 is modified to Cysteine persulfide.

It belongs to the HCP family. It depends on [4Fe-4S] cluster as a cofactor. Hybrid [4Fe-2O-2S] cluster is required as a cofactor.

It is found in the cytoplasm. It carries out the reaction A + NH4(+) + H2O = hydroxylamine + AH2 + H(+). Catalyzes the reduction of hydroxylamine to form NH(3) and H(2)O. This Rippkaea orientalis (strain PCC 8801 / RF-1) (Cyanothece sp. (strain PCC 8801)) protein is Hydroxylamine reductase.